The sequence spans 222 residues: Cytidylate kinase (222 aa).

11 to 19 (GPTASGKGT) lines the ATP pocket.

This sequence belongs to the cytidylate kinase family. Type 1 subfamily.

The protein localises to the cytoplasm. It catalyses the reaction CMP + ATP = CDP + ADP. The catalysed reaction is dCMP + ATP = dCDP + ADP. The protein is Cytidylate kinase of Cupriavidus necator (strain ATCC 17699 / DSM 428 / KCTC 22496 / NCIMB 10442 / H16 / Stanier 337) (Ralstonia eutropha).